The chain runs to 180 residues: Pituitary tumor-transforming gene 1 protein-interacting protein (180 aa).

A signal peptide spans 1–32 (MAPGVARGPTPYWRLRLGGAALLLLLIPVAAA). Residues 33–96 (QEPPGAACSQ…RWGVCWVNFE (64 aa)) lie on the Extracellular side of the membrane. Positions 39–92 (ACSQNTNKTCEECLKNVSCLWCNTNKACLDYPVTSVLPPASLCKLSSARWGVCW) constitute a PSI domain. N-linked (GlcNAc...) asparagine glycans are attached at residues Asn-45 and Asn-54. Residues 97 to 117 (ALIITMSVVGGTLLLGIAICC) form a helical membrane-spanning segment. Residues 118-180 (CCCCRRKRSR…ENPYARFENN (63 aa)) lie on the Cytoplasmic side of the membrane. Residues 130-165 (DRSEEKAMREREERRIRQEERRAEMKTRHDEIRKKY) adopt a coiled-coil conformation. Residues 131-157 (RSEEKAMREREERRIRQEERRAEMKTR) form a disordered region. Position 174 is a phosphotyrosine (Tyr-174).

As to quaternary structure, interacts with PTTG1. In terms of tissue distribution, ubiquitous.

It localises to the membrane. The protein localises to the cytoplasm. It is found in the nucleus. In terms of biological role, may facilitate PTTG1 nuclear translocation. The sequence is that of Pituitary tumor-transforming gene 1 protein-interacting protein (PTTG1IP) from Homo sapiens (Human).